The sequence spans 101 residues: Large ribosomal subunit protein bL28 (101 aa).

This sequence belongs to the bacterial ribosomal protein bL28 family.

The polypeptide is Large ribosomal subunit protein bL28 (Rhodopseudomonas palustris (strain BisB18)).